Consider the following 443-residue polypeptide: D-lactate dehydrogenase (443 aa).

Topologically, residues 1–182 (MSWIDELSKI…GGKTIKNSSG (182 aa)) are extracellular. Residues 32–209 (RAAENFVVVK…TKATIRLFPQ (178 aa)) form the FAD-binding PCMH-type domain. The chain crosses the membrane as a helical span at residues 183–203 (YSLLHLLVGSEGTLAVITKAT). The Cytoplasmic segment spans residues 204–383 (IRLFPQMRDM…WEKSYFEFRK (180 aa)). Residues 384–404 (SLLSLAVSLGGVISGEHGIGA) form a helical membrane-spanning segment. The Extracellular segment spans residues 405 to 443 (VKLSELEELFPEQFELMRQIKLLFDPKNILNPGKVVRKL).

This sequence belongs to the FAD-binding oxidoreductase/transferase type 4 family. It depends on FAD as a cofactor. Zn(2+) serves as cofactor.

The protein resides in the cell membrane. It catalyses the reaction (R)-lactate + A = pyruvate + AH2. Its function is as follows. Catalyzes the dehydrogenation of (R)-lactate (D-lactate) to pyruvate. Is likely involved in the utilization of D-lactate as a sole source for both carbon and electrons for dissimilatory sulfate reduction. Cannot use L-lactate as substrate, and NAD(+), horse cytochrome c, methylene blue or dimethylnaphthoquinone as acceptors. Active in vitro with artificial electron acceptors such as 2,6-dichlorophenolindophenol (DCPIP); the physiological acceptor is not known, but potential acceptors include cytochromes or quinones. This is D-lactate dehydrogenase from Archaeoglobus fulgidus (strain ATCC 49558 / DSM 4304 / JCM 9628 / NBRC 100126 / VC-16).